A 201-amino-acid chain; its full sequence is Dimethylsulfoniopropionate lyase DddQ (201 aa).

A divalent metal cation contacts are provided by histidine 130, glutamate 134, tyrosine 136, and histidine 169.

Belongs to the non-heme iron-dependent dioxygenase family. As to quaternary structure, homodimer. Requires a divalent metal cation as cofactor.

The catalysed reaction is S,S-dimethyl-beta-propiothetin = acrylate + dimethyl sulfide + H(+). Functionally, may act as a dimethylsulfoniopropionate (DMSP) in vitro, releasing dimethyl sulfide (DMS). DMS is the principal form by which sulfur is transported from oceans to the atmosphere. The real activity of the protein is however subject to debate and it is unclear whether it constitutes a real dimethylsulfoniopropionate lyase in vivo. This chain is Dimethylsulfoniopropionate lyase DddQ, found in Ruegeria pomeroyi (strain ATCC 700808 / DSM 15171 / DSS-3) (Silicibacter pomeroyi).